Here is a 63-residue protein sequence, read N- to C-terminus: Large ribosomal subunit protein uL29 (63 aa).

This sequence belongs to the universal ribosomal protein uL29 family.

The chain is Large ribosomal subunit protein uL29 from Pseudomonas fluorescens (strain ATCC BAA-477 / NRRL B-23932 / Pf-5).